A 171-amino-acid chain; its full sequence is MALGSNTKFYETPNHPFQGERIADEANLIGRYGLKNKEELWRAQSELRGYRREARKLLGSAGEHETESEEFLARLKRYGILNEQDQLDDVLSLDVTDVLERRLQTVVYRKGYANTPEQARQFIVHGHIVLDDARVTRPGMTVETAVESSVGFDEHSSLSDELHPERAEAQE.

The S4 RNA-binding domain occupies 101 to 165; that stretch reads RRLQTVVYRK…SSLSDELHPE (65 aa). The tract at residues 148 to 171 is disordered; that stretch reads SSVGFDEHSSLSDELHPERAEAQE. Basic and acidic residues predominate over residues 152–171; the sequence is FDEHSSLSDELHPERAEAQE.

Belongs to the universal ribosomal protein uS4 family. As to quaternary structure, part of the 30S ribosomal subunit. Contacts protein S5. The interaction surface between S4 and S5 is involved in control of translational fidelity.

One of the primary rRNA binding proteins, it binds directly to 16S rRNA where it nucleates assembly of the body of the 30S subunit. Its function is as follows. With S5 and S12 plays an important role in translational accuracy. This is Small ribosomal subunit protein uS4 from Haloarcula marismortui (strain ATCC 43049 / DSM 3752 / JCM 8966 / VKM B-1809) (Halobacterium marismortui).